The following is a 414-amino-acid chain: Serpin A3-6 (414 aa).

Residues 1 to 25 (MRTERVSPLLALGILVAGLCSRVHC) form the signal peptide. 5 N-linked (GlcNAc...) asparagine glycosylation sites follow: Asn-103, Asn-183, Asn-233, Asn-267, and Asn-321.

It belongs to the serpin family. In terms of assembly, homodimer.

The protein resides in the cytoplasmic vesicle. Its subcellular location is the secretory vesicle. It is found in the chromaffin granule. It localises to the secreted. Serine protease inhibitor. In Bos taurus (Bovine), this protein is Serpin A3-6.